A 372-amino-acid chain; its full sequence is Beta-1,3-N-acetylglucosaminyltransferase radical fringe (372 aa).

Over 1–10 (MNSSCLGLRR) the chain is Cytoplasmic. Residues 11 to 27 (TCFLLSVTAAAVLLLLL) form a helical; Signal-anchor for type II membrane protein membrane-spanning segment. At 28–372 (PRGQPPAAPR…TIWCPNKKMS (345 aa)) the chain is on the lumenal side. Positions 30–48 (GQPPAAPRRRPPPAGPSRP) are enriched in pro residues. The tract at residues 30-96 (GQPPAAPRRR…RVRMGPPGGS (67 aa)) is disordered. Residues 64 to 78 (DRGGGSGAAGGGRGV) show a composition bias toward gly residues. Arg-120 provides a ligand contact to substrate. N-linked (GlcNAc...) asparagine glycosylation is present at Asn-159. Intrachain disulfides connect Cys-160/Cys-171 and Cys-189/Cys-253. Substrate is bound at residue Asp-193. Position 194 (Asp-194) interacts with Mn(2+). Asp-283 is an active-site residue. His-307 provides a ligand contact to Mn(2+). Cysteines 357 and 366 form a disulfide.

Belongs to the glycosyltransferase 31 family. Requires Mn(2+) as cofactor.

The protein localises to the golgi apparatus membrane. The enzyme catalyses 3-O-(alpha-L-fucosyl)-L-threonyl-[EGF-like domain protein] + UDP-N-acetyl-alpha-D-glucosamine = 3-O-(N-acetyl-beta-D-glucosaminyl-(1-&gt;3)-alpha-L-fucosyl)-L-threonyl-[EGF-like domain protein] + UDP + H(+). It carries out the reaction 3-O-(alpha-L-fucosyl)-L-seryl-[EGF-like domain protein] + UDP-N-acetyl-alpha-D-glucosamine = 3-O-(N-acetyl-beta-D-glucosaminyl-(1-&gt;3)-alpha-L-fucosyl)-L-seryl-[EGF-like domain protein] + UDP + H(+). Glycosyltransferase that initiates the elongation of O-linked fucose residues attached to EGF-like repeats in the extracellular domain of Notch molecules. Plays an important role in limb outgrowth, it directs the formation and positioning of the apical ectodermal ridge (AER), one of the key organizer centers of vertebrate limb development. This is Beta-1,3-N-acetylglucosaminyltransferase radical fringe (RFNG) from Gallus gallus (Chicken).